We begin with the raw amino-acid sequence, 56 residues long: Potassium channel toxin alpha-KTx 9.8 (56 aa).

Positions 1 to 19 (MSRLFTLVLIVLAMNVMMA) are cleaved as a signal peptide. Residues 20–28 (IISDPVVEA) constitute a propeptide that is removed on maturation. 3 disulfides stabilise this stretch: C31–C47, C34–C52, and C38–C54.

Belongs to the short scorpion toxin superfamily. Potassium channel inhibitor family. Alpha-KTx 09 subfamily. As to expression, expressed by the venom gland.

The protein localises to the secreted. Functionally, potassium channel inhibitor. The chain is Potassium channel toxin alpha-KTx 9.8 from Buthus israelis (Israeli scorpion).